A 519-amino-acid polypeptide reads, in one-letter code: Sterile alpha motif domain-containing protein 1 (519 aa).

A compositionally biased stretch (pro residues) spans 1–11 (MAGPPALPPPE). 2 disordered regions span residues 1 to 30 (MAGP…ASPH) and 87 to 232 (YKGS…PVSL). A compositionally biased stretch (low complexity) spans 12–29 (TAAAATTAAAASSSAASP). An SAMD1-like winged helix (WH) domain is found at 23–99 (SSSAASPHYQ…SISYRNAARV (77 aa)). Thr107 carries the post-translational modification Phosphothreonine. A compositionally biased stretch (pro residues) spans 108–133 (PPAPPRVPRGGPAAPPPTPAPPPAPV). The segment covering 134 to 147 (AAPTRAPRAAAATA) has biased composition (low complexity). Ser150 carries the post-translational modification Phosphoserine. Residues 157-166 (GPRAQRAAPL) show a composition bias toward low complexity. The segment covering 167 to 217 (AAPPPAPAAPPAAAPPAGPRRAPPPAVAAREPPAPPQQQQPPPPQPQPPPE) has biased composition (pro residues). The span at 218 to 230 (GGAARAGGPARPV) shows a compositional bias: low complexity. Phosphoserine is present on Ser242. Basic and acidic residues predominate over residues 261-271 (EAARGRLERTR). Disordered stretches follow at residues 261–381 (EAAR…PGSC) and 417–439 (PALP…KPTD). Residues 308–325 (KEEEDEDEDEEEEEEDNV) show a composition bias toward acidic residues. The SAM domain maps to 443-511 (WTVMDVVEYF…KVLQQGHFED (69 aa)).

As to quaternary structure, homopolymerize into a closed pentameric ring. Interacts (via SAM domain) with L3MBTL3 (via SAM domain); the interaction mediates L3MBTL3 binding to chromatin. Interacts (via WH domain) with KDM1A; the interaction modulates KDM1A function. In terms of tissue distribution, expressed to similar levels in different organs. Expressed at higher levels in bone marrow, osteoclasts and spleen. Expressed in vascular smooth muscle cells.

It localises to the nucleus. It is found in the chromosome. Its subcellular location is the secreted. Unmethylated CpG islands (CGIs)-binding protein which localizes to H3K4me3-decorated CGIs, where it acts as a transcriptional repressor. Tethers L3MBTL3 to chromatin and interacts with the KDM1A histone demethylase complex to modulate H3K4me2 and H3K4me3 levels at CGIs. Plays a role in atherogenesis by binding with LDL on cell surface and promoting LDL oxidation which leads to the formation of foam cell. The protein is Sterile alpha motif domain-containing protein 1 of Mus musculus (Mouse).